Reading from the N-terminus, the 139-residue chain is Small ribosomal subunit protein bS6 (139 aa).

The tract at residues 118–139 (SFKGGSKIETPTGSESTDIQEK) is disordered. Positions 126-139 (ETPTGSESTDIQEK) are enriched in polar residues.

The protein belongs to the bacterial ribosomal protein bS6 family.

Functionally, binds together with bS18 to 16S ribosomal RNA. This Borrelia garinii subsp. bavariensis (strain ATCC BAA-2496 / DSM 23469 / PBi) (Borreliella bavariensis) protein is Small ribosomal subunit protein bS6.